We begin with the raw amino-acid sequence, 722 residues long: D-(-)-3-hydroxybutyrate oligomer hydrolase (722 aa).

An N-terminal signal peptide occupies residues 1–25 (MKTMQGKGSGRRLRGALLVTMAASG). Serine 319 acts as the Charge relay system in catalysis.

The protein belongs to the D-(-)-3-hydroxybutyrate oligomer hydrolase family.

It is found in the secreted. It catalyses the reaction (3R)-hydroxybutanoate dimer + H2O = 2 (R)-3-hydroxybutanoate + H(+). The protein operates within lipid metabolism; butanoate metabolism. Inhibited by diisopropylfluorophosphate (DFP). In terms of biological role, participates in the degradation of poly-3-hydroxybutyrate (PHB). It works downstream of poly(3-hydroxybutyrate) depolymerase, hydrolyzing D(-)-3-hydroxybutyrate oligomers of various length (3HB-oligomers) into 3HB-monomers. The sequence is that of D-(-)-3-hydroxybutyrate oligomer hydrolase from Ralstonia pickettii (Burkholderia pickettii).